Reading from the N-terminus, the 474-residue chain is tRNA-2-methylthio-N(6)-dimethylallyladenosine synthase (474 aa).

Residues 3 to 120 (KKLLIKTWGC…LPEMIKQSQT (118 aa)) enclose the MTTase N-terminal domain. C12, C49, C83, C157, C161, and C164 together coordinate [4Fe-4S] cluster. The region spanning 143-375 (RAEGATAFVS…QQTINAQAMR (233 aa)) is the Radical SAM core domain. Residues 378 to 441 (RLMLATEQRV…ANSLRGELVR (64 aa)) form the TRAM domain.

Belongs to the methylthiotransferase family. MiaB subfamily. Monomer. It depends on [4Fe-4S] cluster as a cofactor.

The protein localises to the cytoplasm. It catalyses the reaction N(6)-dimethylallyladenosine(37) in tRNA + (sulfur carrier)-SH + AH2 + 2 S-adenosyl-L-methionine = 2-methylsulfanyl-N(6)-dimethylallyladenosine(37) in tRNA + (sulfur carrier)-H + 5'-deoxyadenosine + L-methionine + A + S-adenosyl-L-homocysteine + 2 H(+). Its function is as follows. Catalyzes the methylthiolation of N6-(dimethylallyl)adenosine (i(6)A), leading to the formation of 2-methylthio-N6-(dimethylallyl)adenosine (ms(2)i(6)A) at position 37 in tRNAs that read codons beginning with uridine. This Vibrio parahaemolyticus serotype O3:K6 (strain RIMD 2210633) protein is tRNA-2-methylthio-N(6)-dimethylallyladenosine synthase.